Here is a 539-residue protein sequence, read N- to C-terminus: Oviduct-specific glycoprotein (539 aa).

The N-terminal stretch at Met1–Ala21 is a signal peptide. One can recognise a GH18 domain in the interval His22–Asp385. A disulfide bridge links Cys26 with Cys51. Chitin-binding positions include Pro71–Leu72, Gly98–Asn101, Tyr142, Leu211–Asp214, and Trp355. An N-linked (GlcNAc...) asparagine glycan is attached at Asn402. Disordered stretches follow at residues Thr433–Thr480 and Gln503–Leu539. Over residues Ala440–Pro457 the composition is skewed to low complexity.

This sequence belongs to the glycosyl hydrolase 18 family. As to expression, oviduct.

Its subcellular location is the cytoplasmic vesicle. The protein resides in the secretory vesicle. Its function is as follows. Binds to oocyte zona pellucida in vivo. May play a role in the fertilization process and/or early embryonic development. This chain is Oviduct-specific glycoprotein (OVGP1), found in Ovis aries (Sheep).